Reading from the N-terminus, the 104-residue chain is Large ribosomal subunit protein uL24 (104 aa).

It belongs to the universal ribosomal protein uL24 family. As to quaternary structure, part of the 50S ribosomal subunit.

In terms of biological role, one of two assembly initiator proteins, it binds directly to the 5'-end of the 23S rRNA, where it nucleates assembly of the 50S subunit. Its function is as follows. One of the proteins that surrounds the polypeptide exit tunnel on the outside of the subunit. The polypeptide is Large ribosomal subunit protein uL24 (Bartonella bacilliformis (strain ATCC 35685 / KC583 / Herrer 020/F12,63)).